A 586-amino-acid chain; its full sequence is A-type ATP synthase subunit A (586 aa).

232–239 (GPFGSGKT) is an ATP binding site.

The protein belongs to the ATPase alpha/beta chains family. As to quaternary structure, has multiple subunits with at least A(3), B(3), C, D, E, F, H, I and proteolipid K(x).

It localises to the cell membrane. It catalyses the reaction ATP + H2O + 4 H(+)(in) = ADP + phosphate + 5 H(+)(out). Its function is as follows. Component of the A-type ATP synthase that produces ATP from ADP in the presence of a proton gradient across the membrane. The A chain is the catalytic subunit. In Methanococcus maripaludis (strain DSM 14266 / JCM 13030 / NBRC 101832 / S2 / LL), this protein is A-type ATP synthase subunit A.